Here is a 254-residue protein sequence, read N- to C-terminus: Small ribosomal subunit protein uS2 (254 aa).

This sequence belongs to the universal ribosomal protein uS2 family.

This chain is Small ribosomal subunit protein uS2, found in Borrelia recurrentis (strain A1).